The primary structure comprises 343 residues: Heat-inducible transcription repressor HrcA (343 aa).

It belongs to the HrcA family.

Negative regulator of class I heat shock genes (grpE-dnaK-dnaJ and groELS operons). Prevents heat-shock induction of these operons. This chain is Heat-inducible transcription repressor HrcA, found in Mycolicibacterium gilvum (strain PYR-GCK) (Mycobacterium gilvum (strain PYR-GCK)).